The sequence spans 187 residues: Elongation factor P (187 aa).

It belongs to the elongation factor P family.

The protein localises to the cytoplasm. It functions in the pathway protein biosynthesis; polypeptide chain elongation. Functionally, involved in peptide bond synthesis. Stimulates efficient translation and peptide-bond synthesis on native or reconstituted 70S ribosomes in vitro. Probably functions indirectly by altering the affinity of the ribosome for aminoacyl-tRNA, thus increasing their reactivity as acceptors for peptidyl transferase. The sequence is that of Elongation factor P from Nocardioides sp. (strain ATCC BAA-499 / JS614).